Consider the following 139-residue polypeptide: Gastrula zinc finger protein XlCGF67.1 (139 aa).

5 consecutive C2H2-type zinc fingers follow at residues 6–28 (VSCP…KKVH), 33–55 (YSCS…LRTH), 61–83 (YSCS…KRIH), 89–111 (FSCQ…QKIH), and 117–139 (FSCS…SRIH).

Belongs to the krueppel C2H2-type zinc-finger protein family.

The protein localises to the nucleus. Its function is as follows. May be involved in transcriptional regulation. This Xenopus laevis (African clawed frog) protein is Gastrula zinc finger protein XlCGF67.1.